Consider the following 336-residue polypeptide: uncharacterized protein (336 aa).

Residues 1-21 form the signal peptide; that stretch reads MSELVLITGITGFVASHSAEA. Lys-38 contributes to the NADP(+) binding site. Thr-153 bears the Phosphothreonine mark. Tyr-167 lines the NADP(+) pocket.

The protein belongs to the NAD(P)-dependent epimerase/dehydratase family. Dihydroflavonol-4-reductase subfamily.

This is an uncharacterized protein from Schizosaccharomyces pombe (strain 972 / ATCC 24843) (Fission yeast).